A 132-amino-acid polypeptide reads, in one-letter code: Hemoglobin heart muscle subunit alpha-type (132 aa).

One can recognise a Globin domain in the interval 1–132; sequence GLSDSEKSAV…GEVGAILTSS (132 aa). Residues histidine 58 and histidine 83 each contribute to the heme b site.

The protein belongs to the globin family. Monomer.

Its function is as follows. This hemoglobin may replace myocardial myoglobin in this amphibian species. The protein is Hemoglobin heart muscle subunit alpha-type of Aquarana catesbeiana (American bullfrog).